Here is a 318-residue protein sequence, read N- to C-terminus: Porphobilinogen deaminase (318 aa).

At cysteine 245 the chain carries S-(dipyrrolylmethanemethyl)cysteine.

Belongs to the HMBS family. Monomer. It depends on dipyrromethane as a cofactor.

The catalysed reaction is 4 porphobilinogen + H2O = hydroxymethylbilane + 4 NH4(+). The protein operates within porphyrin-containing compound metabolism; protoporphyrin-IX biosynthesis; coproporphyrinogen-III from 5-aminolevulinate: step 2/4. Its pathway is porphyrin-containing compound metabolism; chlorophyll biosynthesis. Functionally, tetrapolymerization of the monopyrrole PBG into the hydroxymethylbilane pre-uroporphyrinogen in several discrete steps. The chain is Porphobilinogen deaminase from Prochlorococcus marinus (strain MIT 9215).